A 333-amino-acid chain; its full sequence is Fructose-1,6-bisphosphatase class 1 (333 aa).

Mg(2+) is bound by residues E92, D113, L115, and D116. Residues 116–119 (DGSS), N209, Y242, and K272 each bind substrate. E278 lines the Mg(2+) pocket.

It belongs to the FBPase class 1 family. As to quaternary structure, homotetramer. Requires Mg(2+) as cofactor.

It is found in the cytoplasm. It catalyses the reaction beta-D-fructose 1,6-bisphosphate + H2O = beta-D-fructose 6-phosphate + phosphate. Its pathway is carbohydrate biosynthesis; Calvin cycle. This Chlorobaculum tepidum (strain ATCC 49652 / DSM 12025 / NBRC 103806 / TLS) (Chlorobium tepidum) protein is Fructose-1,6-bisphosphatase class 1.